A 434-amino-acid chain; its full sequence is D-amino acid dehydrogenase (434 aa).

3–17 (VLVLGSGVIGTTSAW) is an FAD binding site.

It belongs to the DadA oxidoreductase family. It depends on FAD as a cofactor.

The enzyme catalyses a D-alpha-amino acid + A + H2O = a 2-oxocarboxylate + AH2 + NH4(+). Its pathway is amino-acid degradation; D-alanine degradation; NH(3) and pyruvate from D-alanine: step 1/1. Its function is as follows. Oxidative deamination of D-amino acids. In Stenotrophomonas maltophilia (strain K279a), this protein is D-amino acid dehydrogenase.